The following is a 444-amino-acid chain: Ribosomal protein uS12 methylthiotransferase RimO (444 aa).

The region spanning 1 to 117 (MKVGIISLGC…ITEVISSALK (117 aa)) is the MTTase N-terminal domain. Cys-10, Cys-46, Cys-80, Cys-154, Cys-158, and Cys-161 together coordinate [4Fe-4S] cluster. A Radical SAM core domain is found at 140-370 (YQPGPSAYIK…WEVQKEITRK (231 aa)). The region spanning 373–441 (EGLVGTEMRV…DYDLIGEMTN (69 aa)) is the TRAM domain.

This sequence belongs to the methylthiotransferase family. RimO subfamily. Requires [4Fe-4S] cluster as cofactor.

It localises to the cytoplasm. The enzyme catalyses L-aspartate(89)-[ribosomal protein uS12]-hydrogen + (sulfur carrier)-SH + AH2 + 2 S-adenosyl-L-methionine = 3-methylsulfanyl-L-aspartate(89)-[ribosomal protein uS12]-hydrogen + (sulfur carrier)-H + 5'-deoxyadenosine + L-methionine + A + S-adenosyl-L-homocysteine + 2 H(+). Functionally, catalyzes the methylthiolation of an aspartic acid residue of ribosomal protein uS12. This chain is Ribosomal protein uS12 methylthiotransferase RimO, found in Natranaerobius thermophilus (strain ATCC BAA-1301 / DSM 18059 / JW/NM-WN-LF).